A 292-amino-acid chain; its full sequence is Type II methyltransferase M.SmaI (292 aa).

The disordered stretch occupies residues Trp110–Glu130.

The protein belongs to the N(4)/N(6)-methyltransferase family. N(4) subfamily.

The catalysed reaction is a 2'-deoxycytidine in DNA + S-adenosyl-L-methionine = an N(4)-methyl-2'-deoxycytidine in DNA + S-adenosyl-L-homocysteine + H(+). Its function is as follows. A beta subtype methylase thatnrecognizes the double-stranded sequence 5'-CCCGGG-3', methylates C-2 on both strands, and protects the DNA from cleavage by the SmaI endonuclease. The polypeptide is Type II methyltransferase M.SmaI (smaIM) (Serratia marcescens).